A 163-amino-acid chain; its full sequence is Ribonuclease P protein component (163 aa).

Residues 1–68 (MDEKDVATQP…GGKLLSLKGD (68 aa)) are disordered. Positions 8–19 (TQPQETGQNPRL) are enriched in polar residues.

This sequence belongs to the RnpA family. In terms of assembly, consists of a catalytic RNA component (M1 or rnpB) and a protein subunit.

The catalysed reaction is Endonucleolytic cleavage of RNA, removing 5'-extranucleotides from tRNA precursor.. Its function is as follows. RNaseP catalyzes the removal of the 5'-leader sequence from pre-tRNA to produce the mature 5'-terminus. It can also cleave other RNA substrates such as 4.5S RNA. The protein component plays an auxiliary but essential role in vivo by binding to the 5'-leader sequence and broadening the substrate specificity of the ribozyme. This Thermus thermophilus (strain ATCC BAA-163 / DSM 7039 / HB27) protein is Ribonuclease P protein component.